Here is a 419-residue protein sequence, read N- to C-terminus: Glucose-1-phosphate adenylyltransferase (419 aa).

Alpha-D-glucose 1-phosphate is bound by residues Tyr106, Gly171, 186–187 (EK), and Ser204.

It belongs to the bacterial/plant glucose-1-phosphate adenylyltransferase family. In terms of assembly, homotetramer.

The catalysed reaction is alpha-D-glucose 1-phosphate + ATP + H(+) = ADP-alpha-D-glucose + diphosphate. It functions in the pathway glycan biosynthesis; glycogen biosynthesis. Its function is as follows. Involved in the biosynthesis of ADP-glucose, a building block required for the elongation reactions to produce glycogen. Catalyzes the reaction between ATP and alpha-D-glucose 1-phosphate (G1P) to produce pyrophosphate and ADP-Glc. The polypeptide is Glucose-1-phosphate adenylyltransferase (Roseobacter denitrificans (strain ATCC 33942 / OCh 114) (Erythrobacter sp. (strain OCh 114))).